A 149-amino-acid chain; its full sequence is MIPMEELKVKKITNGTVIDHIDAGKALMVFKVLNVPKETSVMIAINVPSKKKGKKDILKIEGIELKKEDVDKISLISPDVTINIIRNGKVVEKLKPQIPDEIEGTLKCTNPNCITNKEKVRGKFKIESKNPLKIRCYYCEKFLNEVIFE.

The Zn(2+) site is built by Cys108, Cys113, Cys136, and Cys139.

This sequence belongs to the PyrI family. In terms of assembly, heterododecamer (2C3:3R2) of six catalytic PyrB chains organized as two trimers (C3), and six regulatory PyrI chains organized as three dimers (R2). Zn(2+) is required as a cofactor.

Its function is as follows. Involved in allosteric regulation of aspartate carbamoyltransferase. The protein is Aspartate carbamoyltransferase regulatory chain (pyrI) of Methanocaldococcus jannaschii (strain ATCC 43067 / DSM 2661 / JAL-1 / JCM 10045 / NBRC 100440) (Methanococcus jannaschii).